We begin with the raw amino-acid sequence, 283 residues long: Poly(3-hydroxyalkanoate) depolymerase (283 aa).

Residues 30-253 (PLLIFNGIGA…IDDGHLFLIT (224 aa)) form the AB hydrolase-1 domain. Ser102 serves as the catalytic Charge relay system.

This sequence belongs to the AB hydrolase superfamily. Lipase family.

Its function is as follows. Complements a mutant that does not degrade PHA; might be a lipase. This chain is Poly(3-hydroxyalkanoate) depolymerase, found in Ectopseudomonas oleovorans (Pseudomonas oleovorans).